A 183-amino-acid polypeptide reads, in one-letter code: Disulfide bond formation protein B 2 (183 aa).

The Cytoplasmic portion of the chain corresponds to 1-9 (MSLACSRSL). Residues 10–26 (FFMAFTAGILALGASYY) traverse the membrane as a helical segment. The Periplasmic portion of the chain corresponds to 27 to 44 (LEYAVGLVPCSLCLVQRL). Cysteine 36 and cysteine 39 are oxidised to a cystine. Residues 45-61 (FMSVLTLCCGLAAVHGP) form a helical membrane-spanning segment. The Cytoplasmic portion of the chain corresponds to 62–68 (QRVGLSL). The helical transmembrane segment at 69–85 (YWMVTLLSSLGGTTAAW) threads the bilayer. The Periplasmic portion of the chain corresponds to 86–142 (RQVLFQSDSLQELAHCAPNPEEMFSSLPWLCALMRMFNDTADCAELSWTLFDLSIPE). Cysteine 101 and cysteine 128 are joined by a disulfide. Residues 143–161 (WSLLFFVGMSILAVYQLLR) form a helical membrane-spanning segment. At 162–183 (QVWMALQRPLSGQPSHPALVRD) the chain is on the cytoplasmic side.

This sequence belongs to the DsbB family.

It localises to the cell inner membrane. Functionally, required for disulfide bond formation in some periplasmic proteins. Acts by oxidizing the DsbA protein. This chain is Disulfide bond formation protein B 2, found in Pseudomonas fluorescens (strain Pf0-1).